Reading from the N-terminus, the 911-residue chain is Disks large homolog 1 (911 aa).

Positions 4 to 64 (RKQDTQRALH…FYEVTLLDNP (61 aa)) constitute an L27 domain. S39 carries the phosphoserine; by CaMK2 modification. The tract at residues 70–105 (SKQCEPVQPGNPWESGSLSSAAVTSESLPGGLSPPV) is disordered. The segment covering 83-96 (ESGSLSSAAVTSES) has biased composition (polar residues). 3 positions are modified to phosphoserine: S122, S138, and S158. The interaction with SH3 domains stretch occupies residues 162 to 212 (PTEAVPPSSPIVPVTPALPVPAESPVVLPSTPQANPPPVLVNTDSLETPTY). PDZ domains lie at 224–310 (EITL…VKRR) and 318–404 (EIKL…AAKP). The interval 224–545 (EITLERGNSG…QAVTIVAQYR (322 aa)) is required for interaction with MARCHF2. Position 232 is a phosphoserine; by CaMK2 (S232). Y398 carries the post-translational modification Phosphotyrosine. The span at 419 to 441 (TNSSSQSVDNHVSPSSYLGQTPA) shows a compositional bias: polar residues. Residues 419–443 (TNSSSQSVDNHVSPSSYLGQTPASP) are disordered. Residues 465–545 (KVVLHRGSTG…QAVTIVAQYR (81 aa)) enclose the PDZ 3 domain. Phosphoserine occurs at positions 567, 572, 574, 578, 597, 618, 684, 687, and 841. The 71-residue stretch at 580-650 (KRSLYVRALF…PSKRRVEKKE (71 aa)) folds into the SH3 domain. Residues 662 to 696 (KTRGDKGEIPDDMGSKGLKHVTSNASDSESSYHEY) are disordered. In terms of domain architecture, Guanylate kinase-like spans 721-896 (TRPVIILGPM…IYNQVKQIIE (176 aa)).

It belongs to the MAGUK family. Homotetramer. Interacts (via guanylate kinase-like domain) with DLGAP1, DLGAP2, DLGAP3, DLGAP4 and MAP1A. Interacts (via guanylate kinase-like domain) with KIF13B. May interact with HTR2A. Interacts (via PDZ domains) with GRIA1. Interacts (via PDZ domains) with GRIN2A. Interacts (via PDZ domains) with KCND2 and KCND3. Interacts (via PDZ domains) with KCNA1, KCNA2, KCNA3 and KCNA4. Interacts (via PDZ domains) with ADGRA3. Interacts with KCNF1. Interacts with CAMK2. Interacts with cytoskeleton-associated protein EPB41. Interacts with cytoskeleton-associated protein EZR. Found in a complex with KCNA5 and CAV3. Found in a complex with APC and CTNNB1. Interacts (via PDZ domains) with APC. Interacts with CDH1 through binding to PIK3R1. Forms multiprotein complexes with CASK, LIN7A, LIN7B, LIN7C, APBA1, and KCNJ12. Interacts with TOPK. Forms a tripartite complex composed of DLG1, MPP7 and LIN7 (LIN7A or LIN7C). May interact with TJAP1. Interacts with PTEN. Interacts with FRMPD4 (via C-terminus). Interacts with LRFN1 and LRFN2. Interacts with LRFN4 and SFPQ. Interacts (via PDZ domains) with ADGRA2 (via PDZ-binding motif). Interacts with ADAM10; this interaction recruits ADAM10 to the cell membrane during long-term depression in hippocampal neurons. Interacts with DGKI (via PDZ-binding motif). Interacts (via PDZ domains) with MARCHF2 (via PDZ domain); the interaction leads to DLG1 ubiqtuitination and degradation. Interacts (via N-terminus) with MPP3; this interaction connects CADM1 with DLG1 and links CADM1 with the regulatory subunit of phosphoinositide-3-kinase (PI3K) by forming a multiprotein complex and participates in cell spreading. Post-translationally, phosphorylated by MAPK12. Phosphorylation of Ser-39 modulates transport to the plasma membrane. Phosphorylation of Ser-232 regulates association with GRIN2A. Ubiquitinated; by MARCHF2 which results in its degradation. Widely expressed. Strongly expressed in epithelial cells, in the small intestine it is only detected in the vili. Expressed in brain, heart (at protein level), muscle, lung and liver. In the brain it was detected in olfactory bulbs, cerebral cortex, hippocampus, and spinal cord (at protein level).

The protein resides in the cell membrane. It localises to the basolateral cell membrane. It is found in the endoplasmic reticulum membrane. Its subcellular location is the postsynaptic density. The protein localises to the synapse. The protein resides in the sarcolemma. It localises to the cell junction. It is found in the cytoplasm. Its subcellular location is the apical cell membrane. Essential multidomain scaffolding protein required for normal development. Recruits channels, receptors and signaling molecules to discrete plasma membrane domains in polarized cells. Promotes epithelial cell layer barrier function via maintaining cell-cell adhesion. May play a role in adherens junction assembly, signal transduction, cell proliferation, synaptogenesis and lymphocyte activation. Regulates the excitability of cardiac myocytes by modulating the functional expression of Kv4 channels. Functional regulator of Kv1.5 channel. During long-term depression in hippocampal neurons, it recruits ADAM10 to the plasma membrane. The protein is Disks large homolog 1 of Rattus norvegicus (Rat).